The primary structure comprises 165 residues: MTLIILEGPDCCFKSTVAAKLSKELKYPIIKGSSFELAKSGNEKLFEHFNKLADEDNVIIDRFVYSNLVYAKKFKDYSILTERQLRFIEDKIKAKAKVVYLHADPSVIKKRLRVRGDEYIEGKDIDSILELYREVMSNAGLHTYSWDTGQWSSDEIAKDIIFLVE.

The protein is SPbeta prophage-derived uncharacterized protein YorR (yorR) of Bacillus subtilis (strain 168).